Consider the following 210-residue polypeptide: Outer surface protein C (210 aa).

A signal peptide spans 1–18; it reads MKKNTLSAILMTLFLFIS. Cysteine 19 carries N-palmitoyl cysteine lipidation. Residue cysteine 19 is the site of S-diacylglycerol cysteine attachment.

It belongs to the OspC lipoprotein family. As to quaternary structure, homodimer. Binds human plasminogen on the bacterial surface, also binds human plasmin. Interacts with tick I.ricinus salivary protein Iric-1. Interacts with human complement C4 beta chain (C4B); whole bacteria bind to wells coated with C4b. Binding is inhibited by human complement factor C2.

The protein localises to the cell outer membrane. It localises to the cell surface. A major immunodominant protein in mammalian hosts. Required for the initial stages of mammalian infection. Interaction with tick I.ricinus salivary protein Salp15 protects the bacteria from antibody-mediated killing in vitro and in vivo. Inhibits macrophage-mediated phagocytosis of the bacteria. Binds human plasminogen; this probably confers an extracellular protease activity on the bacteria that allows it to traverse tissue. Binds human complement C4-B, which may inhibit the complement cascade. Experiments in mice suggest it may play another role after initial infection. The polypeptide is Outer surface protein C (Borreliella burgdorferi (strain ATCC 35210 / DSM 4680 / CIP 102532 / B31) (Borrelia burgdorferi)).